We begin with the raw amino-acid sequence, 123 residues long: MRQRLLPSVTSLLLVALLFPGSSQARHVNHSATEALGELRERAPGQGTNGFQLLRHAVKRDLLPPRTPPYQVHISHQEARGPSFKICVGFLGPRWARGCSTGNEKYHLPYAARDLQTFFLPFW.

An N-terminal signal peptide occupies residues 1-25 (MRQRLLPSVTSLLLVALLFPGSSQA). Residue asparagine 29 is glycosylated (N-linked (GlcNAc...) asparagine).

Belongs to the SPAG11 family.

Its subcellular location is the secreted. Its function is as follows. Has antimicrobial activity against E.coli. Plays a role in the defense response in the male reproductive tract, contributing to sperm maturation, storage and protection. This chain is Sperm-associated antigen 11A, found in Homo sapiens (Human).